The following is a 700-amino-acid chain: Elongation factor G (700 aa).

The region spanning 8–290 (ERYRNIGISA…AVVEYLPAPT (283 aa)) is the tr-type G domain. Residues 17–24 (AHIDAGKT), 88–92 (DTPGH), and 142–145 (NKMD) each bind GTP.

It belongs to the TRAFAC class translation factor GTPase superfamily. Classic translation factor GTPase family. EF-G/EF-2 subfamily.

It is found in the cytoplasm. Its function is as follows. Catalyzes the GTP-dependent ribosomal translocation step during translation elongation. During this step, the ribosome changes from the pre-translocational (PRE) to the post-translocational (POST) state as the newly formed A-site-bound peptidyl-tRNA and P-site-bound deacylated tRNA move to the P and E sites, respectively. Catalyzes the coordinated movement of the two tRNA molecules, the mRNA and conformational changes in the ribosome. In Haemophilus influenzae (strain 86-028NP), this protein is Elongation factor G.